The primary structure comprises 58 residues: Large ribosomal subunit protein uL30 (58 aa).

It belongs to the universal ribosomal protein uL30 family. As to quaternary structure, part of the 50S ribosomal subunit.

This Azotobacter vinelandii (strain DJ / ATCC BAA-1303) protein is Large ribosomal subunit protein uL30.